Here is a 1163-residue protein sequence, read N- to C-terminus: Carbamoyl phosphate synthase large chain (1163 aa).

Residues 1 to 456 (MPKRQDIKSI…SLQKALRGLE (456 aa)) are carboxyphosphate synthetic domain. Arg129 contacts ATP. Residues 148 to 170 (LANATDIKDHDRKSHEAERSALK) form a disordered region. Positions 153–170 (DIKDHDRKSHEAERSALK) are enriched in basic and acidic residues. The ATP-grasp 1 domain occupies 185–381 (LENQWNLGEG…IAKIAAKLAV (197 aa)). Residues Arg222, Gly228, Gly229, Glu261, Val263, Glu268, Gly294, Val295, His296, Gln338, and Glu352 each coordinate ATP. Gln338, Glu352, and Asn354 together coordinate Mg(2+). Residues Gln338, Glu352, and Asn354 each coordinate Mn(2+). An oligomerization domain region spans residues 457–614 (TGLTGLDEIE…PFVGAARSEA (158 aa)). The carbamoyl phosphate synthetic domain stretch occupies residues 615 to 1026 (QVSDRKKVVI…AFAKSQLGAG (412 aa)). In terms of domain architecture, ATP-grasp 2 spans 743–955 (QKLLMKLDLN…IAKIAARVMA (213 aa)). ATP contacts are provided by Arg779, Ser839, Leu841, Glu846, Gly871, Ile872, His873, Ser874, Gln914, and Glu926. The Mg(2+) site is built by Gln914, Glu926, and Asn928. Positions 914, 926, and 928 each coordinate Mn(2+). Residues 1027-1163 (VDLPRDGTVF…VRPLQSYFET (137 aa)) enclose the MGS-like domain. Positions 1027 to 1163 (VDLPRDGTVF…VRPLQSYFET (137 aa)) are allosteric domain.

Belongs to the CarB family. As to quaternary structure, composed of two chains; the small (or glutamine) chain promotes the hydrolysis of glutamine to ammonia, which is used by the large (or ammonia) chain to synthesize carbamoyl phosphate. Tetramer of heterodimers (alpha,beta)4. The cofactor is Mg(2+). Mn(2+) serves as cofactor.

It carries out the reaction hydrogencarbonate + L-glutamine + 2 ATP + H2O = carbamoyl phosphate + L-glutamate + 2 ADP + phosphate + 2 H(+). The enzyme catalyses hydrogencarbonate + NH4(+) + 2 ATP = carbamoyl phosphate + 2 ADP + phosphate + 2 H(+). Its pathway is amino-acid biosynthesis; L-arginine biosynthesis; carbamoyl phosphate from bicarbonate: step 1/1. The protein operates within pyrimidine metabolism; UMP biosynthesis via de novo pathway; (S)-dihydroorotate from bicarbonate: step 1/3. Its function is as follows. Large subunit of the glutamine-dependent carbamoyl phosphate synthetase (CPSase). CPSase catalyzes the formation of carbamoyl phosphate from the ammonia moiety of glutamine, carbonate, and phosphate donated by ATP, constituting the first step of 2 biosynthetic pathways, one leading to arginine and/or urea and the other to pyrimidine nucleotides. The large subunit (synthetase) binds the substrates ammonia (free or transferred from glutamine from the small subunit), hydrogencarbonate and ATP and carries out an ATP-coupled ligase reaction, activating hydrogencarbonate by forming carboxy phosphate which reacts with ammonia to form carbamoyl phosphate. The chain is Carbamoyl phosphate synthase large chain from Rhizobium meliloti (strain 1021) (Ensifer meliloti).